The chain runs to 444 residues: E3 ubiquitin-protein ligase APD2 (444 aa).

Positions 1-15 (MSLPDSLPSSSSSPP) are enriched in low complexity. The tract at residues 1-41 (MSLPDSLPSSSSSPPVTREETGFHRFEHHGNDSGFDHRDRP) is disordered. Basic and acidic residues predominate over residues 17–41 (TREETGFHRFEHHGNDSGFDHRDRP). Helical transmembrane passes span 74–94 (VVVVATFCIFVSMTLILGLYG) and 312–332 (IAYIVCMGVVTALLLIVSSLF). The segment at 393–432 (CAICYDAPRDCFFLSCGHCVACFQCGTRIAETSGFCPVCR) adopts an RING-type zinc-finger fold.

Interacts with At1g78040, At1g10650, VHA-c4/AVAP4, VHA-c''2/VMA16 and TUFA. In terms of tissue distribution, expressed in the shoot apical meristems (SAM), root tips, pollen and inflorescences.

It is found in the endomembrane system. It catalyses the reaction S-ubiquitinyl-[E2 ubiquitin-conjugating enzyme]-L-cysteine + [acceptor protein]-L-lysine = [E2 ubiquitin-conjugating enzyme]-L-cysteine + N(6)-ubiquitinyl-[acceptor protein]-L-lysine.. It participates in protein modification; protein ubiquitination. Functionally, exhibits E2-dependent E3 ligase activity. Involved in pollen mitosis II (PMII) regulation during male gametogenesis. This chain is E3 ubiquitin-protein ligase APD2, found in Arabidopsis thaliana (Mouse-ear cress).